The following is a 269-amino-acid chain: MQEIIASVDHIKFDLEIAVEQQLGAQPLPFPGMDKSGAAVCEFFLKAACGKGGMCPFRHISGEKTVVCKHWLRGLCKKGDQCEFLHEYDMTKMPECYFYSKFGECSNKECPFLHIDPESKIKDCPWYDRGFCKHGPLCRHRHTRRVICVNYLVGFCPEGPSCKFMHPRFELPMGTTEQPPLPQQTQPPAKQSNNPPLQRSSSLIQLTSQNSSPNQQRTPQVIGVMQSQNSSAGNRGPRPLEQVTCYKCGEKGHYANRCTKGHLAFLSGQ.

C3H1-type zinc fingers lie at residues 35–61, 62–89, 90–117, 118–142, and 143–169; these read KSGAAVCEFFLKAACGKGGMCPFRHIS, GEKTVVCKHWLRGLCKKGDQCEFLHEYD, MTKMPECYFYSKFGECSNKECPFLHIDP, ESKIKDCPWYDRGFCKHGPLCRHRH, and TRRVICVNYLVGFCPEGPSCKFMHPRF. Residues 173 to 199 form a disordered region; it reads MGTTEQPPLPQQTQPPAKQSNNPPLQR. A phosphoserine mark is found at Ser200, Ser202, and Ser212. The segment at 243-260 adopts a CCHC-type zinc-finger fold; it reads VTCYKCGEKGHYANRCTK. A Phosphoserine modification is found at Ser267.

This sequence belongs to the CPSF4/YTH1 family. As to quaternary structure, component of the cleavage and polyadenylation specificity factor (CPSF) complex, composed of CPSF1, CPSF2, CPSF3, CPSF4 and FIP1L1. Interacts with FIP1L1. (Microbial infection) Interacts with influenza A virus NS1 blocks processing of pre-mRNAs, thereby preventing nuclear export of host cell mRNAs.

The protein localises to the nucleus. Functionally, component of the cleavage and polyadenylation specificity factor (CPSF) complex that play a key role in pre-mRNA 3'-end formation, recognizing the AAUAAA signal sequence and interacting with poly(A) polymerase and other factors to bring about cleavage and poly(A) addition. CPSF4 binds RNA polymers with a preference for poly(U). The chain is Cleavage and polyadenylation specificity factor subunit 4 (CPSF4) from Homo sapiens (Human).